The sequence spans 384 residues: Sialyltransferase-like protein 3 (384 aa).

The Cytoplasmic portion of the chain corresponds to 1 to 5 (MKRRH). Residues 6-26 (WSHPSCGLLLLVAVFCLLLVF) form a helical; Signal-anchor for type II membrane protein membrane-spanning segment. Residues 27–384 (RCSQLRHSGD…FRLPPVSFYR (358 aa)) are Lumenal-facing. Residue N241 is glycosylated (N-linked (GlcNAc...) asparagine).

The protein belongs to the glycosyltransferase 29 family.

It is found in the golgi apparatus membrane. Possesses sialyltransferase-like activity in vitro. Transfers sialic acid to the glycoprotein asialofetuin. The transferred sialic acid is linked to galactose of Gal-beta-1,3-GalNAc through alpha-2,6-linkage. This is Sialyltransferase-like protein 3 from Oryza sativa subsp. japonica (Rice).